The sequence spans 121 residues: Insertion element IS406 uncharacterized 13.3 kDa protein (121 aa).

This is Insertion element IS406 uncharacterized 13.3 kDa protein from Burkholderia multivorans (strain ATCC 17616 / 249).